We begin with the raw amino-acid sequence, 85 residues long: UPF0386 protein HNE_3437 (85 aa).

Belongs to the UPF0386 family.

The polypeptide is UPF0386 protein HNE_3437 (Hyphomonas neptunium (strain ATCC 15444)).